The chain runs to 270 residues: 3-methyl-2-oxobutanoate hydroxymethyltransferase (270 aa).

Positions 41 and 80 each coordinate Mg(2+). 3-methyl-2-oxobutanoate contacts are provided by residues 41–42 (DS), aspartate 80, and lysine 109. Position 111 (glutamate 111) interacts with Mg(2+). Residue glutamate 178 is the Proton acceptor of the active site.

The protein belongs to the PanB family. Homodecamer; pentamer of dimers. The cofactor is Mg(2+).

The protein localises to the cytoplasm. The catalysed reaction is 3-methyl-2-oxobutanoate + (6R)-5,10-methylene-5,6,7,8-tetrahydrofolate + H2O = 2-dehydropantoate + (6S)-5,6,7,8-tetrahydrofolate. It functions in the pathway cofactor biosynthesis; (R)-pantothenate biosynthesis; (R)-pantoate from 3-methyl-2-oxobutanoate: step 1/2. In terms of biological role, catalyzes the reversible reaction in which hydroxymethyl group from 5,10-methylenetetrahydrofolate is transferred onto alpha-ketoisovalerate to form ketopantoate. This Thermotoga neapolitana (strain ATCC 49049 / DSM 4359 / NBRC 107923 / NS-E) protein is 3-methyl-2-oxobutanoate hydroxymethyltransferase.